A 704-amino-acid polypeptide reads, in one-letter code: DNA ligase (704 aa).

Residues 43–47, 92–93, and glutamate 124 contribute to the NAD(+) site; these read DADYD and SL. Catalysis depends on lysine 126, which acts as the N6-AMP-lysine intermediate. NAD(+) is bound by residues arginine 147, glutamate 182, lysine 298, and lysine 322. Zn(2+) is bound by residues cysteine 427, cysteine 430, cysteine 445, and cysteine 451. Residues 625 to 704 enclose the BRCT domain; the sequence is PVASPVAGKI…DGWLRLIGDA (80 aa).

It belongs to the NAD-dependent DNA ligase family. LigA subfamily. Requires Mg(2+) as cofactor. Mn(2+) serves as cofactor.

It catalyses the reaction NAD(+) + (deoxyribonucleotide)n-3'-hydroxyl + 5'-phospho-(deoxyribonucleotide)m = (deoxyribonucleotide)n+m + AMP + beta-nicotinamide D-nucleotide.. Functionally, DNA ligase that catalyzes the formation of phosphodiester linkages between 5'-phosphoryl and 3'-hydroxyl groups in double-stranded DNA using NAD as a coenzyme and as the energy source for the reaction. It is essential for DNA replication and repair of damaged DNA. The chain is DNA ligase from Cereibacter sphaeroides (strain ATCC 17029 / ATH 2.4.9) (Rhodobacter sphaeroides).